Here is a 249-residue protein sequence, read N- to C-terminus: Zinc import ATP-binding protein ZnuC (249 aa).

In terms of domain architecture, ABC transporter spans 1 to 219 (MRLVSLRNAT…PEYQALFGSG (219 aa)). 36-43 (GPNGSGKS) is an ATP binding site.

Belongs to the ABC transporter superfamily. Zinc importer (TC 3.A.1.15.5) family. As to quaternary structure, the complex is composed of two ATP-binding proteins (ZnuC), two transmembrane proteins (ZnuB) and a solute-binding protein (ZnuA).

The protein localises to the cell inner membrane. It carries out the reaction Zn(2+)(out) + ATP(in) + H2O(in) = Zn(2+)(in) + ADP(in) + phosphate(in) + H(+)(in). Part of the ABC transporter complex ZnuABC involved in zinc import. Responsible for energy coupling to the transport system. This Ruegeria sp. (strain TM1040) (Silicibacter sp.) protein is Zinc import ATP-binding protein ZnuC.